The sequence spans 158 residues: MASKKVYELTQSGLDQLKDELTHLKDVKRVENLEALKEAREQGDLSENADYDAARNEQARIEARILEIESILKNVKIIRTNDDSTTVNIGKKVLLHFVEKNKDVEYHVVGTIEADPKNFKISIESPLGRAIKGKEVGDLVQIKSATNKQSNVEIKAIS.

The stretch at 14-76 (LDQLKDELTH…EIESILKNVK (63 aa)) forms a coiled coil.

It belongs to the GreA/GreB family.

Its function is as follows. Necessary for efficient RNA polymerase transcription elongation past template-encoded arresting sites. The arresting sites in DNA have the property of trapping a certain fraction of elongating RNA polymerases that pass through, resulting in locked ternary complexes. Cleavage of the nascent transcript by cleavage factors such as GreA or GreB allows the resumption of elongation from the new 3'terminus. GreA releases sequences of 2 to 3 nucleotides. This is Transcription elongation factor GreA from Acholeplasma laidlawii (strain PG-8A).